The chain runs to 306 residues: Ornithine carbamoyltransferase (306 aa).

Carbamoyl phosphate contacts are provided by residues 51 to 54 (STRT), glutamine 78, arginine 102, and 129 to 132 (HPCQ). L-ornithine contacts are provided by residues asparagine 160, aspartate 223, and 227 to 228 (SM). Carbamoyl phosphate is bound by residues 263–264 (CL) and arginine 291.

Belongs to the aspartate/ornithine carbamoyltransferase superfamily. OTCase family.

Its subcellular location is the cytoplasm. The catalysed reaction is carbamoyl phosphate + L-ornithine = L-citrulline + phosphate + H(+). It functions in the pathway amino-acid biosynthesis; L-arginine biosynthesis; L-arginine from L-ornithine and carbamoyl phosphate: step 1/3. Functionally, reversibly catalyzes the transfer of the carbamoyl group from carbamoyl phosphate (CP) to the N(epsilon) atom of ornithine (ORN) to produce L-citrulline. The sequence is that of Ornithine carbamoyltransferase from Nostoc sp. (strain PCC 7120 / SAG 25.82 / UTEX 2576).